We begin with the raw amino-acid sequence, 266 residues long: Hydroxyethylthiazole kinase (266 aa).

M46 lines the substrate pocket. Residues K122 and T166 each contribute to the ATP site. Residue G193 coordinates substrate.

This sequence belongs to the Thz kinase family. Requires Mg(2+) as cofactor.

It catalyses the reaction 5-(2-hydroxyethyl)-4-methylthiazole + ATP = 4-methyl-5-(2-phosphooxyethyl)-thiazole + ADP + H(+). It functions in the pathway cofactor biosynthesis; thiamine diphosphate biosynthesis; 4-methyl-5-(2-phosphoethyl)-thiazole from 5-(2-hydroxyethyl)-4-methylthiazole: step 1/1. In terms of biological role, catalyzes the phosphorylation of the hydroxyl group of 4-methyl-5-beta-hydroxyethylthiazole (THZ). This Caldivirga maquilingensis (strain ATCC 700844 / DSM 13496 / JCM 10307 / IC-167) protein is Hydroxyethylthiazole kinase.